Consider the following 93-residue polypeptide: Integration host factor subunit beta (93 aa).

Belongs to the bacterial histone-like protein family. Heterodimer of an alpha and a beta chain.

In terms of biological role, this protein is one of the two subunits of integration host factor, a specific DNA-binding protein that functions in genetic recombination as well as in transcriptional and translational control. This is Integration host factor subunit beta (ihfB) from Cereibacter sphaeroides (strain ATCC 17023 / DSM 158 / JCM 6121 / CCUG 31486 / LMG 2827 / NBRC 12203 / NCIMB 8253 / ATH 2.4.1.) (Rhodobacter sphaeroides).